The primary structure comprises 138 residues: Putative pre-16S rRNA nuclease (138 aa).

It belongs to the YqgF nuclease family.

Its subcellular location is the cytoplasm. Could be a nuclease involved in processing of the 5'-end of pre-16S rRNA. The sequence is that of Putative pre-16S rRNA nuclease from Salmonella typhimurium (strain LT2 / SGSC1412 / ATCC 700720).